The chain runs to 484 residues: Fumigaclavine B O-acetyltransferase ifgI (484 aa).

Belongs to the fumigaclavine B O-acetyltransferase family. As to quaternary structure, monomer.

It catalyses the reaction fumigaclavine B + acetyl-CoA = fumigaclavine A + CoA. It participates in alkaloid biosynthesis; ergot alkaloid biosynthesis. In terms of biological role, fumigaclavine B O-acetyltransferase; part of the gene cluster that mediates the biosynthesis of isofumigaclavines, fungal ergot alkaloids. The tryptophan dimethylallyltransferase ifgA catalyzes the first step of ergot alkaloid biosynthesis by condensing dimethylallyl diphosphate (DMAP) and tryptophan to form 4-dimethylallyl-L-tryptophan. The second step is catalyzed by the methyltransferase ifgB that methylates 4-dimethylallyl-L-tryptophan in the presence of S-adenosyl-L-methionine, resulting in the formation of N-methyl-dimethylallyl-L-tryptophan. The catalase ifgD and the FAD-dependent oxidoreductase ifgC then transform N-methyl-dimethylallyl-L-tryptophan to chanoclavine-I which is further oxidized by ifgE in the presence of NAD(+), resulting in the formation of chanoclavine-I aldehyde. The chanoclavine-I aldehyde reductases ifgG and/or fgaOx3 reduce chanoclavine-I aldehyde to dihydrochanoclavine-I aldehyde that spontaneously dehydrates to form 6,8-dimethyl-6,7-didehydroergoline. The festuclavine dehydrogenases ifgF1 and/or ifgF2 then catalyze the reduction of 6,8-dimethyl-6,7-didehydroergoline to form festuclavine. Hydrolysis of festuclavine by a yet undetermined cytochrome P450 monooxygenase (called ifgH) then leads to the formation of isofumigaclavine B which is in turn acetylated by ifgI to isofumigaclavine A. Penicillium roqueforti has interestingly at least two sets of genes for the consumption of chanoclavine-I aldehyde on three different loci, the OYEs ifgG/fgaOx3 and the festuclavine synthase homologs ifgF1/ifgF2. The reason for the duplication of these genes is unclear, probably to ensure the conversion of chanoclavine-I aldehyde by differential gene expression under various environmental conditions. The sequence is that of Fumigaclavine B O-acetyltransferase ifgI from Penicillium roqueforti (strain FM164).